The sequence spans 403 residues: Aminomethyltransferase, mitochondrial (403 aa).

The transit peptide at 1-28 (MQRAVSVVARLGFRLQAFPPALCRPLSC) directs the protein to the mitochondrion. The substrate site is built by E232, R261, and Y399.

The protein belongs to the GcvT family. As to quaternary structure, the glycine cleavage system is composed of four proteins: P, T, L and H.

It is found in the mitochondrion. It carries out the reaction N(6)-[(R)-S(8)-aminomethyldihydrolipoyl]-L-lysyl-[protein] + (6S)-5,6,7,8-tetrahydrofolate = N(6)-[(R)-dihydrolipoyl]-L-lysyl-[protein] + (6R)-5,10-methylene-5,6,7,8-tetrahydrofolate + NH4(+). In terms of biological role, the glycine cleavage system catalyzes the degradation of glycine. In Homo sapiens (Human), this protein is Aminomethyltransferase, mitochondrial.